A 560-amino-acid chain; its full sequence is Phosphoglucomutase 1 (560 aa).

2 residues coordinate alpha-D-glucose 1,6-bisphosphate: arginine 24 and serine 116. The active-site Phosphoserine intermediate is the serine 116. Residues serine 116, aspartate 288, aspartate 290, and aspartate 292 each coordinate Mg(2+). Serine 116 carries the post-translational modification Phosphoserine. Alpha-D-glucose 1,6-bisphosphate-binding residues include aspartate 292, arginine 293, threonine 357, glutamate 376, serine 378, and lysine 389.

It belongs to the phosphohexose mutase family. As to quaternary structure, monomer. Mg(2+) serves as cofactor. Localized primarily to fat bodies in third instar larvae.

The catalysed reaction is alpha-D-glucose 1-phosphate = alpha-D-glucose 6-phosphate. The enzyme catalyses O-phospho-L-seryl-[protein] + alpha-D-glucose 1-phosphate = alpha-D-glucose 1,6-bisphosphate + L-seryl-[protein]. It carries out the reaction alpha-D-glucose 1,6-bisphosphate + L-seryl-[protein] = O-phospho-L-seryl-[protein] + alpha-D-glucose 6-phosphate. Catalyzes the reversible isomerization of alpha-D-glucose 1-phosphate to alpha-D-glucose 6-phosphate. The mechanism proceeds via the intermediate compound alpha-D-glucose 1,6-bisphosphate. This enzyme participates in both the breakdown and synthesis of glucose. Enzyme of the glycolytic pathway. Glycolysis is essential in glial cells but not in neurons; neurons rely on the citric acid cycle for their energy needs, and on lactate and alanine secreted into the hemolymph by glial cells to fuel it. The sequence is that of Phosphoglucomutase 1 from Drosophila melanogaster (Fruit fly).